We begin with the raw amino-acid sequence, 1006 residues long: Probable beta-galactosidase A (1006 aa).

Residues 1 to 18 form the signal peptide; sequence MKLLSVCAIALLAAQAAG. The substrate site is built by Tyr-96, Asn-140, Ala-141, and Glu-142. Residue Asn-156 is glycosylated (N-linked (GlcNAc...) asparagine). Asn-199 contributes to the substrate binding site. Glu-200 (proton donor) is an active-site residue. Cysteines 205 and 206 form a disulfide. Tyr-260 is a binding site for substrate. Cys-266 and Cys-315 form a disulfide bridge. The Nucleophile role is filled by Glu-298. Tyr-364 is a binding site for substrate. Asn-373, Asn-402, Asn-422, Asn-622, Asn-760, Asn-777, and Asn-914 each carry an N-linked (GlcNAc...) asparagine glycan.

This sequence belongs to the glycosyl hydrolase 35 family.

Its subcellular location is the secreted. It carries out the reaction Hydrolysis of terminal non-reducing beta-D-galactose residues in beta-D-galactosides.. In terms of biological role, cleaves beta-linked terminal galactosyl residues from gangliosides, glycoproteins, and glycosaminoglycans. This chain is Probable beta-galactosidase A (lacA), found in Aspergillus fumigatus (strain ATCC MYA-4609 / CBS 101355 / FGSC A1100 / Af293) (Neosartorya fumigata).